An 802-amino-acid chain; its full sequence is Leucine--tRNA ligase (802 aa).

The 'HIGH' region signature appears at 40–51 (PYPSGAGLHVGH). The short motif at 576 to 580 (KMSKS) is the 'KMSKS' region element. Lysine 579 lines the ATP pocket.

The protein belongs to the class-I aminoacyl-tRNA synthetase family.

It is found in the cytoplasm. It catalyses the reaction tRNA(Leu) + L-leucine + ATP = L-leucyl-tRNA(Leu) + AMP + diphosphate. The protein is Leucine--tRNA ligase of Bacillus cereus (strain ATCC 10987 / NRS 248).